The chain runs to 149 residues: MKTNVIIDGDACPVVNSVIELTKGTGIFVTILRSFSHFSQQIQPEHVKIVYVDDGPDAVDYKIVELASNNDIVITQDYGLASLLIDKVHTVMHHKGNIYHSNNIQSLLNQRYLNAQIRRRGGRHKGPPPFTTEDRLKFEHAFRKIINQI.

It belongs to the UPF0178 family.

The protein is UPF0178 protein SERP0336 of Staphylococcus epidermidis (strain ATCC 35984 / DSM 28319 / BCRC 17069 / CCUG 31568 / BM 3577 / RP62A).